A 2078-amino-acid polypeptide reads, in one-letter code: Nascent polypeptide-associated complex subunit alpha, muscle-specific form (2078 aa).

Disordered regions lie at residues 1-21, 37-96, 595-614, and 732-1944; these read MPGE…QPQA, ALGQ…LGTA, LGEP…PLGV, and KSVP…KAMS. Polar residues-rich tracts occupy residues 9–21 and 60–75; these read VPAT…QPQA and AANQ…TIAS. A compositionally biased stretch (low complexity) spans 775-786; that stretch reads SGASATASSKGT. Positions 837–847 are enriched in polar residues; the sequence is PENSLSFQGSK. Serine 917 bears the Phosphoserine mark. A compositionally biased stretch (pro residues) spans 933-1020; sequence SPSPKGAPTP…PPAVTPPSPK (88 aa). Residues 1045-1067 are compositionally biased toward low complexity; it reads GSPAATPLPKGAPTTPAATLPSP. Positions 1080 to 1113 are enriched in pro residues; the sequence is PTPPAATPPSPKGGPATPSPKGAPMPPAATPPSP. Positions 1114–1130 are enriched in low complexity; sequence KGGLATPPHKGAPTTPA. Composition is skewed to pro residues over residues 1131–1147 and 1154–1170; these read ATPP…PPKG. Serine 1181 carries the phosphoserine modification. Composition is skewed to low complexity over residues 1183–1199, 1206–1222, and 1229–1245; these read KGGL…TTPA. 2 stretches are compositionally biased toward pro residues: residues 1246-1270 and 1292-1344; these read ATPP…PAAT and VTPP…PSPK. Residues 1345 to 1366 are compositionally biased toward low complexity; sequence GTPTLPATTPSSKGGPTTPSSK. 2 positions are modified to phosphoserine: serine 1397 and serine 1474. Positions 1470 to 1481 are enriched in pro residues; sequence VTPPSPKEPPAP. The span at 1485-1507 shows a compositional bias: low complexity; it reads ATSSSPKKAPATPAPMGAPTLPA. Pro residues predominate over residues 1611 to 1625; sequence KEAPTPPAVTPPSPE. The segment covering 1626-1637 has biased composition (low complexity); it reads KGPATPAPKGTP. Residues 1647 to 1656 are compositionally biased toward polar residues; it reads LKDSPTSPAS. Residues 1744 to 1756 show a composition bias toward basic and acidic residues; it reads DSSKTAKGKDASH. Pro residues predominate over residues 1794–1811; it reads PSPPVSLPLAPSPVPTLP. The PXLXP signature appears at 1841 to 1845; the sequence is LPLIP. The segment covering 1876 to 1891 has biased composition (polar residues); sequence SAKQPVTKNNKGSGTE. Positions 1892–1905 are enriched in acidic residues; that stretch reads SDSDESVPELEEQD. At serine 1906 the chain carries Phosphoserine; by ILK1. A compositionally biased stretch (low complexity) spans 1907 to 1920; sequence TQATTQQAQLAAAA. Residues 1932–1943 are required for DNA-binding; that stretch reads QSRSEKKARKAM. Positions 1933–1998 constitute an NAC-A/B domain; the sequence is SRSEKKARKA…AKIEDLSQQA (66 aa). A Phosphoserine modification is found at serine 1995. N6-acetyllysine; alternate is present on lysine 2005. A Glycyl lysine isopeptide (Lys-Gly) (interchain with G-Cter in SUMO2); alternate cross-link involves residue lysine 2005. The residue at position 2022 (threonine 2022) is a Phosphothreonine; by GSK3-beta. Threonine 2024 carries the phosphothreonine modification. Phosphoserine is present on residues serine 2029, serine 2049, serine 2054, and serine 2066. In terms of domain architecture, UBA spans 2039–2078; the sequence is VEVKDIELVMSQANVSRAKAVRALKNNSNDIVNAIMELTM.

As to quaternary structure, interacts (via PXLXP motif) with the muscle-restricted histone methyltransferase SMYD1 (via MYND-type zinc finger).

The protein localises to the cytoplasm. It is found in the nucleus. Its function is as follows. Cardiac- and muscle-specific transcription factor. May act to regulate the expression of genes involved in the development of myotubes. Plays a critical role in ventricular cardiomyocyte expansion and regulates postnatal skeletal muscle growth and regeneration. Involved in the organized assembly of thick and thin filaments of myofibril sarcomeres. The polypeptide is Nascent polypeptide-associated complex subunit alpha, muscle-specific form (NACA) (Homo sapiens (Human)).